Here is a 504-residue protein sequence, read N- to C-terminus: Anaerobic nitric oxide reductase transcription regulator NorR (504 aa).

D57 is modified (4-aspartylphosphate). The 230-residue stretch at 187–416 (MIGLSPGMTQ…LEHAIHRAVV (230 aa)) folds into the Sigma-54 factor interaction domain. Residues 215-222 (GETGTGKE) and 278-287 (ADNGTLFLDE) each bind ATP. The H-T-H motif DNA-binding region spans 479–498 (WAACARMLETDVANLHRLAK).

Its pathway is nitrogen metabolism; nitric oxide reduction. Functionally, required for the expression of anaerobic nitric oxide (NO) reductase, acts as a transcriptional activator for at least the norVW operon. Activation also requires sigma-54. The protein is Anaerobic nitric oxide reductase transcription regulator NorR of Escherichia coli O9:H4 (strain HS).